A 493-amino-acid chain; its full sequence is Galactose-1-phosphate uridylyltransferase (493 aa).

It belongs to the galactose-1-phosphate uridylyltransferase type 2 family.

The protein resides in the cytoplasm. It carries out the reaction alpha-D-galactose 1-phosphate + UDP-alpha-D-glucose = alpha-D-glucose 1-phosphate + UDP-alpha-D-galactose. It participates in carbohydrate metabolism; galactose metabolism. The polypeptide is Galactose-1-phosphate uridylyltransferase (Streptococcus thermophilus (strain CNRZ 1066)).